Here is a 109-residue protein sequence, read N- to C-terminus: Juvenile hormone esterase, isoform A (109 aa).

Belongs to the type-B carboxylesterase/lipase family. Fat body, the site of their biosynthesis, and the hemolymph where it is secreted.

It carries out the reaction juvenile hormone I + H2O = juvenile hormone I carboxylate + methanol + H(+). The enzyme catalyses juvenile hormone III + H2O = juvenile hormone III carboxylate + methanol + H(+). JH esterase plays a crucial role in the decrease of JH activity in lepidopteran insects, by hydrolyzing the methyl ester of JH. It is also involved in the transport of JH. The sequence is that of Juvenile hormone esterase, isoform A from Trichoplusia ni (Cabbage looper).